The following is a 198-amino-acid chain: Dual specificity protein phosphatase 13B (198 aa).

Residues His45–Arg193 form the Tyrosine-protein phosphatase domain. The Phosphocysteine intermediate role is filled by Cys138.

It belongs to the protein-tyrosine phosphatase family. Non-receptor class dual specificity subfamily. Highly expressed in the testis (at protein level). Also found in the skeletal muscle.

It carries out the reaction O-phospho-L-tyrosyl-[protein] + H2O = L-tyrosyl-[protein] + phosphate. The catalysed reaction is O-phospho-L-seryl-[protein] + H2O = L-seryl-[protein] + phosphate. It catalyses the reaction O-phospho-L-threonyl-[protein] + H2O = L-threonyl-[protein] + phosphate. Functionally, dual specificity phosphatase that dephosphorylates MAPK8/JNK and MAPK14/p38, but not MAPK1/ERK2, in vitro. Exhibits intrinsic phosphatase activity towards both phospho-seryl/threonyl and -tyrosyl residues, with similar specific activities in vitro. This is Dual specificity protein phosphatase 13B from Homo sapiens (Human).